A 527-amino-acid polypeptide reads, in one-letter code: Putative WEB family protein At4g17210 (527 aa).

2 disordered regions span residues Met-1–Arg-28 and Phe-46–Ser-70. Residues Ser-55–Asp-68 are compositionally biased toward low complexity. 3 coiled-coil regions span residues Ala-95–Ile-159, Ser-202–Met-389, and Lys-436–Ser-513.

The protein belongs to the WEB family.

This Arabidopsis thaliana (Mouse-ear cress) protein is Putative WEB family protein At4g17210.